Reading from the N-terminus, the 163-residue chain is Centrosomal protein of 19 kDa (163 aa).

It belongs to the CEP19 family. As to quaternary structure, interacts with CEP43; this interaction is required for its localization to the mother centriole. Interacts (via residues 121-150) with RABL2B. Interacts (via C-terminus) with CEP350; this interaction is required for its localization to the mother centriole.

Its subcellular location is the cytoplasm. It is found in the cytoskeleton. The protein localises to the microtubule organizing center. It localises to the centrosome. The protein resides in the centriole. Its subcellular location is the spindle pole. It is found in the cilium basal body. Functionally, required for ciliation. Recruits the RABL2B GTPase to the ciliary base to initiate ciliation. After specifically capturing the activated GTP-bound RABL2B, the CEP19-RABL2B complex binds intraflagellar transport (IFT) complex B from the large pool pre-docked at the base of the cilium and thus triggers its entry into the cilia. Involved in the early steps in cilia formation by recruiting the ciliary vesicles (CVs) to the distal end of the mother centriole where they fuse to initiate cilium assembly. Involved in microtubule (MT) anchoring to the centrosomes. The protein is Centrosomal protein of 19 kDa (CEP19) of Homo sapiens (Human).